We begin with the raw amino-acid sequence, 461 residues long: Trigger factor (461 aa).

The 88-residue stretch at 169 to 256 (GDTAVIDFAG…LKDLKIKELP (88 aa)) folds into the PPIase FKBP-type domain. The segment at 432–461 (PGEAIEPGSGEDAPPEVAAGATEPEAQPNS) is disordered.

The protein belongs to the FKBP-type PPIase family. Tig subfamily.

It is found in the cytoplasm. It catalyses the reaction [protein]-peptidylproline (omega=180) = [protein]-peptidylproline (omega=0). In terms of biological role, involved in protein export. Acts as a chaperone by maintaining the newly synthesized protein in an open conformation. Functions as a peptidyl-prolyl cis-trans isomerase. The sequence is that of Trigger factor from Gloeobacter violaceus (strain ATCC 29082 / PCC 7421).